We begin with the raw amino-acid sequence, 482 residues long: tRNA sulfurtransferase (482 aa).

Residues 61-165 (AAIVAELTRI…DERLILVTAR (105 aa)) form the THUMP domain. ATP contacts are provided by residues 183–184 (LI), Lys-265, Gly-287, and Gln-296. Cysteines 344 and 456 form a disulfide. Residues 404-482 (FSHNDVILDI…GFKNVKVYRP (79 aa)) enclose the Rhodanese domain. Cys-456 serves as the catalytic Cysteine persulfide intermediate.

This sequence belongs to the ThiI family.

Its subcellular location is the cytoplasm. The catalysed reaction is [ThiI sulfur-carrier protein]-S-sulfanyl-L-cysteine + a uridine in tRNA + 2 reduced [2Fe-2S]-[ferredoxin] + ATP + H(+) = [ThiI sulfur-carrier protein]-L-cysteine + a 4-thiouridine in tRNA + 2 oxidized [2Fe-2S]-[ferredoxin] + AMP + diphosphate. It carries out the reaction [ThiS sulfur-carrier protein]-C-terminal Gly-Gly-AMP + S-sulfanyl-L-cysteinyl-[cysteine desulfurase] + AH2 = [ThiS sulfur-carrier protein]-C-terminal-Gly-aminoethanethioate + L-cysteinyl-[cysteine desulfurase] + A + AMP + 2 H(+). Its pathway is cofactor biosynthesis; thiamine diphosphate biosynthesis. In terms of biological role, catalyzes the ATP-dependent transfer of a sulfur to tRNA to produce 4-thiouridine in position 8 of tRNAs, which functions as a near-UV photosensor. Also catalyzes the transfer of sulfur to the sulfur carrier protein ThiS, forming ThiS-thiocarboxylate. This is a step in the synthesis of thiazole, in the thiamine biosynthesis pathway. The sulfur is donated as persulfide by IscS. The sequence is that of tRNA sulfurtransferase from Erwinia tasmaniensis (strain DSM 17950 / CFBP 7177 / CIP 109463 / NCPPB 4357 / Et1/99).